We begin with the raw amino-acid sequence, 265 residues long: Early E4 31 kDa protein (265 aa).

This sequence belongs to the adenoviridae E4 30 to 34 kDa protein family. As to quaternary structure, interacts with E1B-55k.

It localises to the host nucleus. The protein localises to the host cytoplasm. In terms of biological role, plays a major role to prevent cellular inhibition of viral genome replication by nuclear bodies. Assembles an SCF-like E3 ubiquitin ligase complex based on the cellular proteins ELOB, ELOC, CUL5 and RBX1, in cooperation with viral E1B-55K. This viral RING-type ligase ubiquitinates cellular substrates prior to proteasomal degradation: p53/TP53, LIG4, MRE11-RAD50-NBS1 (MRN) complex, ITGA3, DAXX and BLM. The protein is Early E4 31 kDa protein of Canine adenovirus serotype 1 (strain RI261) (CAdV-1).